A 242-amino-acid polypeptide reads, in one-letter code: MTTFMNNKTKSAGFTFKQFHVSHDKCAMKVGTDGILLGAWASLQGNRYLDLGTGSGLIALMLAQRTQTDCHITGVEIDPSAYRQATENVRQSPWADKIQLEQQNIVDFTRTCTKKFDTVLSNPPYFEQGVDCRDKQRDTARYTQTLSHSDWLNLAADCLTNTGRIHLILPYAAGKNLQKQTALFCARCCEVITKSGKIPQRLLLTFSKQPCTTEQSRLVVYNEQNQYTEQFIALTRDFYLNF.

It belongs to the methyltransferase superfamily. tRNA (adenine-N(6)-)-methyltransferase family.

The protein localises to the cytoplasm. The enzyme catalyses adenosine(37) in tRNA1(Val) + S-adenosyl-L-methionine = N(6)-methyladenosine(37) in tRNA1(Val) + S-adenosyl-L-homocysteine + H(+). Its function is as follows. Specifically methylates the adenine in position 37 of tRNA(1)(Val) (anticodon cmo5UAC). The sequence is that of tRNA1(Val) (adenine(37)-N6)-methyltransferase from Mannheimia succiniciproducens (strain KCTC 0769BP / MBEL55E).